The sequence spans 193 residues: Outer-membrane lipoprotein LolB (193 aa).

The first 21 residues, Met1–Ala21, serve as a signal peptide directing secretion. The N-palmitoyl cysteine moiety is linked to residue Cys22. Cys22 carries the S-diacylglycerol cysteine lipid modification.

Belongs to the LolB family. In terms of assembly, monomer.

The protein localises to the cell outer membrane. Its function is as follows. Plays a critical role in the incorporation of lipoproteins in the outer membrane after they are released by the LolA protein. In Azoarcus sp. (strain BH72), this protein is Outer-membrane lipoprotein LolB.